A 1052-amino-acid chain; its full sequence is Membrane-bound transcription factor site-1 protease (1052 aa).

The first 17 residues, 1–17, serve as a signal peptide directing secretion; the sequence is MKLVSTWLLVLVVLLCG. Residues 18–186 constitute a propeptide that is removed on maturation; the sequence is KRHLGDRLGT…TGRHSSRRLL (169 aa). Asn148 carries N-linked (GlcNAc...) asparagine glycosylation. Ser168 carries the phosphoserine modification. Over 187-999 the chain is Lumenal; the sequence is RAIPRQVAQT…MPGRYNQEVG (813 aa). The 283-residue stretch at 190–472 folds into the Peptidase S8 domain; sequence PRQVAQTLQA…HGKLDLLRAY (283 aa). Asp218 functions as the Charge relay system in the catalytic mechanism. Asn236 carries N-linked (GlcNAc...) asparagine glycosylation. His249 functions as the Charge relay system in the catalytic mechanism. N-linked (GlcNAc...) asparagine glycosylation is present at Asn305. Ser414 serves as the catalytic Charge relay system. N-linked (GlcNAc...) asparagine glycans are attached at residues Asn515 and Asn728. Polar residues predominate over residues 877 to 887; it reads PSLSHSGNRQR. The tract at residues 877 to 900 is disordered; it reads PSLSHSGNRQRPPSGAGLAPPERM. An N-linked (GlcNAc...) asparagine glycan is attached at Asn939. Residues 1000-1022 form a helical membrane-spanning segment; that stretch reads QTIPVFAFLGAMVALAFFVVQIS. At 1023 to 1052 the chain is on the cytoplasmic side; the sequence is KAKSRPKRRRPRAKRPQLAQQAHPARTPSV. A compositionally biased stretch (basic residues) spans 1026-1037; the sequence is SRPKRRRPRAKR. Residues 1026–1052 form a disordered region; the sequence is SRPKRRRPRAKRPQLAQQAHPARTPSV.

Belongs to the peptidase S8 family. Interacts with LYSET; this interaction bridges GNPTAB to MBTPS1. Requires Ca(2+) as cofactor. In terms of processing, the 148 kDa zymogen is processed progressively into two membrane-bound 120 and 106 kDa forms in the endoplasmic reticulum, and late into a secreted 98 kDa form. The propeptide is autocatalytically removed through an intramolecular cleavage after Leu-186. Further cleavage generates 14, 10, and 8 kDa intermediates.

It is found in the endoplasmic reticulum membrane. Its subcellular location is the golgi apparatus membrane. The enzyme catalyses Processes precursors containing basic and hydrophobic/aliphatic residues at P4 and P2, respectively, with a relatively relaxed acceptance of amino acids at P1 and P3.. With respect to regulation, inhibited by divalent copper and zinc ions, but not by nickel or cobalt. Inhibited by its prosegment, but not smaller fragments. Inhibited by 4-(2-aminoethyl)benzenesulfonyl fluoride (AEBSF), a serine protease inhibitor. In terms of biological role, serine protease that cleaves after hydrophobic or small residues, provided that Arg or Lys is in position P4: known substrates include SREBF1/SREBP1, SREBF2/SREBP2, BDNF, GNPTAB, ATF6, ATF6B and FAM20C. Cleaves substrates after Arg-Ser-Val-Leu (SREBP2), Arg-His-Leu-Leu (ATF6), Arg-Gly-Leu-Thr (BDNF) and its own propeptide after Arg-Arg-Leu-Leu. Catalyzes the first step regulated intramembrane proteolysis activation of the sterol regulatory element-binding proteins (SREBPs) SREBF1/SREBP1 and SREBF2/SREBP2. Also mediates the first step of the regulated intramembrane proteolytic activation of the cyclic AMP-dependent transcription factor ATF-6 (ATF6 and ATF6B). Mediates the protein cleavage of GNPTAB into subunit alpha and beta, thereby participating in biogenesis of lysosomes. Cleaves the propeptide from FAM20C which is required for FAM20C secretion from the Golgi apparatus membrane and for enhancement of FAM20C kinase activity, promoting osteoblast differentiation and biomineralization. Involved in the regulation of M6P-dependent Golgi-to-lysosome trafficking of lysosomal enzymes. It is required for the activation of CREB3L2/BBF2H7, a transcriptional activator of MIA3/TANGO and other genes controlling mega vesicle formation. Therefore, it plays a key role in the regulation of mega vesicle-mediated collagen trafficking. In astrocytes and osteoblasts, upon DNA damage and ER stress, mediates the first step of the regulated intramembrane proteolytic activation of the transcription factor CREB3L1, leading to the inhibition of cell-cycle progression. The sequence is that of Membrane-bound transcription factor site-1 protease (Mbtps1) from Mus musculus (Mouse).